Consider the following 37-residue polypeptide: Delta/kappa-conotoxin Mo3964 (37 aa).

Disulfide bonds link C4–C12, C11–C27, and C21–C34.

Expressed by the venom duct.

It localises to the secreted. Its function is as follows. This toxin reduces the outward currents that are due to the opening of voltage-gated potassium channels in DRG neurons. In addition, leftward shift in the presence of this toxin is observed in averaged normalized conductance-voltage plot of outward sodium currents (Nav1.2/SCN2A). This chain is Delta/kappa-conotoxin Mo3964, found in Conus monile (Necklace cone).